Reading from the N-terminus, the 265-residue chain is 5'-nucleotidase SurE (265 aa).

Residues Asp8, Asp9, Ser39, and Asn96 each coordinate a divalent metal cation.

It belongs to the SurE nucleotidase family. It depends on a divalent metal cation as a cofactor.

It is found in the cytoplasm. It carries out the reaction a ribonucleoside 5'-phosphate + H2O = a ribonucleoside + phosphate. Nucleotidase that shows phosphatase activity on nucleoside 5'-monophosphates. The chain is 5'-nucleotidase SurE from Dehalococcoides mccartyi (strain ATCC BAA-2100 / JCM 16839 / KCTC 5957 / BAV1).